A 328-amino-acid chain; its full sequence is Tryptophan--tRNA ligase (328 aa).

ATP is bound by residues 9–11 (QPS) and 17–18 (GN). The 'HIGH' region signature appears at 10-18 (PSGVITIGN). Asp132 contacts L-tryptophan. ATP is bound by residues 144-146 (GED), Ile183, and 192-196 (KMSKS). The short motif at 192-196 (KMSKS) is the 'KMSKS' region element.

It belongs to the class-I aminoacyl-tRNA synthetase family. In terms of assembly, homodimer.

The protein localises to the cytoplasm. It catalyses the reaction tRNA(Trp) + L-tryptophan + ATP = L-tryptophyl-tRNA(Trp) + AMP + diphosphate + H(+). Its activity is regulated as follows. Inhibited by indolmycin, a competitive inhibitor for tryptophan. Functionally, catalyzes the attachment of tryptophan to tRNA(Trp). This chain is Tryptophan--tRNA ligase, found in Geobacillus stearothermophilus (Bacillus stearothermophilus).